The following is a 922-amino-acid chain: Isoleucine--tRNA ligase (922 aa).

Positions 57–67 match the 'HIGH' region motif; that stretch reads PYANGDIHLGH. Glu-553 serves as a coordination point for L-isoleucyl-5'-AMP. A 'KMSKS' region motif is present at residues 594–598; it reads KMSKS. Lys-597 lines the ATP pocket. Zn(2+) contacts are provided by Cys-892, Cys-895, Cys-912, and Cys-915.

This sequence belongs to the class-I aminoacyl-tRNA synthetase family. IleS type 1 subfamily. As to quaternary structure, monomer. It depends on Zn(2+) as a cofactor.

The protein resides in the cytoplasm. The catalysed reaction is tRNA(Ile) + L-isoleucine + ATP = L-isoleucyl-tRNA(Ile) + AMP + diphosphate. Functionally, catalyzes the attachment of isoleucine to tRNA(Ile). As IleRS can inadvertently accommodate and process structurally similar amino acids such as valine, to avoid such errors it has two additional distinct tRNA(Ile)-dependent editing activities. One activity is designated as 'pretransfer' editing and involves the hydrolysis of activated Val-AMP. The other activity is designated 'posttransfer' editing and involves deacylation of mischarged Val-tRNA(Ile). This chain is Isoleucine--tRNA ligase, found in Desulfitobacterium hafniense (strain Y51).